The primary structure comprises 177 residues: MPAWGALFLLWATAEATKDCPSPCTCRALETMGLWVDCRGHGLTALPALPARTRHLLLANNSLQSVPPGAFDHLPQLQTLDVTQNPWHCDCSLTYLRLWLEDRTPEALLQVRCASPSLAAHGPLGRLTGYQLGSCGWQLQASWVRPGVLWDVALVAVAALGLALLAGLLCATTEALD.

A signal peptide spans 1 to 16; that stretch reads MPAWGALFLLWATAEA. The LRRNT domain maps to 17–51; it reads TKDCPSPCTCRALETMGLWVDCRGHGLTALPALPA. The Extracellular portion of the chain corresponds to 17–147; the sequence is TKDCPSPCTC…QLQASWVRPG (131 aa). An N-linked (GlcNAc...) asparagine glycan is attached at Asn60. The stretch at 60–83 is one LRR repeat; that stretch reads NNSLQSVPPGAFDHLPQLQTLDVT. Positions 85-137 constitute an LRRCT domain; it reads NPWHCDCSLTYLRLWLEDRTPEALLQVRCASPSLAAHGPLGRLTGYQLGSCGW. The helical transmembrane segment at 148–168 threads the bilayer; it reads VLWDVALVAVAALGLALLAGL. Over 169–177 the chain is Cytoplasmic; the sequence is LCATTEALD.

In terms of assembly, two GP-Ib beta are disulfide-linked to one GP-Ib alpha. GP-IX is complexed with the GP-Ib heterodimer via a non covalent linkage.

It localises to the membrane. The GPIb-V-IX complex functions as the vWF receptor and mediates vWF-dependent platelet adhesion to blood vessels. The adhesion of platelets to injured vascular surfaces in the arterial circulation is a critical initiating event in hemostasis. GP-IX may provide for membrane insertion and orientation of GP-Ib. This is Platelet glycoprotein IX (GP9) from Homo sapiens (Human).